The primary structure comprises 678 residues: Ribosome biogenesis protein BOP1 homolog (678 aa).

Over residues 1 to 10 (MGHSDGDHGS) the composition is skewed to basic and acidic residues. The segment at 1–73 (MGHSDGDHGS…VAPRNTIGDV (73 aa)) is disordered. The segment covering 24–63 (WSDDDDEGSLSFEDSGEGSDAESDEPDAPAVEESDSSEDE) has biased composition (acidic residues). 7 WD repeats span residues 343–384 (GHNG…KVWN), 386–424 (GGVV…EDAQ), 463–505 (IHHK…SHHP), 508–548 (KLPG…KKLE), 549–588 (SGVR…RPYK), 592–631 (NHSK…DLNQ), and 647–678 (SDGR…LYCD).

Belongs to the WD repeat BOP1/ERB1 family.

Its subcellular location is the nucleus. It localises to the nucleolus. The protein localises to the nucleoplasm. Functionally, required for maturation of ribosomal RNAs and formation of the large ribosomal subunit. The chain is Ribosome biogenesis protein BOP1 homolog from Oryza sativa subsp. japonica (Rice).